Here is a 393-residue protein sequence, read N- to C-terminus: MENDTVSEMNQTELQPQAAVALEYQVVTILLVVIICGLGIVGNIMVVLVVMRTKHMRTPTNCYLVSLAVADLMVLVAAGLPNITDSIYGSWVYGYVGCLCITYLQYLGINASSCSITAFTIERYIAICHPIKAQFLCTFSRAKKIIIFVWAFTSIYCMLWFFLLDLNISTYKNAVVVSCGYKISRNYYSPIYLMDFGVFYVVPMILATVLYGFIARILFLNPIPSDPKENSKMWKNDSIHQNKNLNLNATNRCFNSTVSSRKQVTKMLAVVVILFALLWMPYRTLVVVNSFLSSPFQENWFLLFCRICIYLNSAINPVIYNLMSQKFRAAFRKLCNCKQKPTEKAANYSVALNYSVIKESDRFSTELEDITVTDTYVSTTKVSFDDTCLASEN.

Residues 1-28 are Extracellular-facing; sequence MENDTVSEMNQTELQPQAAVALEYQVVT. N-linked (GlcNAc...) asparagine glycans are attached at residues Asn-3 and Asn-10. A helical membrane pass occupies residues 29-51; it reads ILLVVIICGLGIVGNIMVVLVVM. Topologically, residues 52 to 61 are cytoplasmic; it reads RTKHMRTPTN. The helical transmembrane segment at 62–83 threads the bilayer; it reads CYLVSLAVADLMVLVAAGLPNI. Over 84 to 99 the chain is Extracellular; that stretch reads TDSIYGSWVYGYVGCL. An intrachain disulfide couples Cys-98 to Cys-179. A helical membrane pass occupies residues 100–121; the sequence is CITYLQYLGINASSCSITAFTI. The Cytoplasmic segment spans residues 122–144; the sequence is ERYIAICHPIKAQFLCTFSRAKK. Residues 145-168 traverse the membrane as a helical segment; the sequence is IIIFVWAFTSIYCMLWFFLLDLNI. Residues 169–193 lie on the Extracellular side of the membrane; sequence STYKNAVVVSCGYKISRNYYSPIYL. Residues 194 to 215 traverse the membrane as a helical segment; sequence MDFGVFYVVPMILATVLYGFIA. Over 216 to 266 the chain is Cytoplasmic; that stretch reads RILFLNPIPSDPKENSKMWKNDSIHQNKNLNLNATNRCFNSTVSSRKQVTK. A helical membrane pass occupies residues 267–288; that stretch reads MLAVVVILFALLWMPYRTLVVV. Topologically, residues 289-296 are extracellular; the sequence is NSFLSSPF. A helical transmembrane segment spans residues 297–319; it reads QENWFLLFCRICIYLNSAINPVI. At 320-393 the chain is on the cytoplasmic side; the sequence is YNLMSQKFRA…FDDTCLASEN (74 aa).

The protein belongs to the G-protein coupled receptor 1 family.

The protein resides in the cell membrane. Receptor for thyrotropin-releasing hormone (TRH). Upon ligand binding, this G-protein-coupled receptor triggers activation of the phosphatidylinositol (IP3)-calcium-protein kinase C (PKC) pathway. This chain is Thyrotropin-releasing hormone receptor (Trhr), found in Mus musculus (Mouse).